A 460-amino-acid polypeptide reads, in one-letter code: Glutamyl-tRNA reductase (460 aa).

Residues 48-51 (TCNR), serine 100, 105-107 (EDQ), and glutamine 111 each bind substrate. Cysteine 49 functions as the Nucleophile in the catalytic mechanism. 180-185 (GAGEIG) contributes to the NADP(+) binding site.

This sequence belongs to the glutamyl-tRNA reductase family. In terms of assembly, homodimer.

The enzyme catalyses (S)-4-amino-5-oxopentanoate + tRNA(Glu) + NADP(+) = L-glutamyl-tRNA(Glu) + NADPH + H(+). Its pathway is porphyrin-containing compound metabolism; protoporphyrin-IX biosynthesis; 5-aminolevulinate from L-glutamyl-tRNA(Glu): step 1/2. Functionally, catalyzes the NADPH-dependent reduction of glutamyl-tRNA(Glu) to glutamate 1-semialdehyde (GSA). In Methanosarcina acetivorans (strain ATCC 35395 / DSM 2834 / JCM 12185 / C2A), this protein is Glutamyl-tRNA reductase.